A 223-amino-acid polypeptide reads, in one-letter code: Adenylate kinase 4, mitochondrial (223 aa).

Residue 15 to 20 (GSGKGT) coordinates a ribonucleoside 5'-triphosphate. Residues 35-64 (SSGHFLRENIKASTEVGEMAKQYIEKSLLV) are NMP. 2 residues coordinate AMP: S36 and R41. At K60 the chain carries N6-succinyllysine. AMP is bound by residues 62–64 (LLV), 89–92 (GFPR), and Q96. Positions 125–162 (RRWIHPPSGRVYNLDFNPPHVHGIDDVTGEPLVQQEDD) are LID. Residues R126 and 135-136 (VY) each bind a ribonucleoside 5'-triphosphate. R170 is an AMP binding site. Residue K175 is modified to N6-acetyllysine. N6-acetyllysine; alternate occurs at positions 179 and 186. 2 positions are modified to N6-succinyllysine; alternate: K179 and K186. T199 is a binding site for a ribonucleoside 5'-triphosphate.

It belongs to the adenylate kinase family. AK3 subfamily. Monomer. Interacts with SLC25A5/ANT2. Highly expressed in kidney, moderately expressed in heart and liver and weakly expressed in brain.

Its subcellular location is the mitochondrion matrix. It catalyses the reaction a ribonucleoside 5'-phosphate + ATP = a ribonucleoside 5'-diphosphate + ADP. The enzyme catalyses AMP + ATP = 2 ADP. The catalysed reaction is GTP + AMP = GDP + ADP. It carries out the reaction CMP + ATP = CDP + ADP. It catalyses the reaction GTP + CMP = CDP + GDP. The enzyme catalyses dAMP + ATP = dADP + ADP. The catalysed reaction is dCMP + ATP = dCDP + ADP. It carries out the reaction a 2'-deoxyribonucleoside 5'-diphosphate + ATP = a 2'-deoxyribonucleoside 5'-triphosphate + ADP. It catalyses the reaction a ribonucleoside 5'-diphosphate + ATP = a ribonucleoside 5'-triphosphate + ADP. The enzyme catalyses GDP + ATP = GTP + ADP. The catalysed reaction is CDP + GTP = CTP + GDP. It carries out the reaction CDP + ATP = CTP + ADP. It catalyses the reaction UDP + ATP = UTP + ADP. The enzyme catalyses GTP + UDP = UTP + GDP. The catalysed reaction is dADP + GTP = dATP + GDP. It carries out the reaction dCDP + GTP = dCTP + GDP. It catalyses the reaction dCDP + ATP = dCTP + ADP. The enzyme catalyses dGDP + ATP = dGTP + ADP. The catalysed reaction is dTDP + GTP = dTTP + GDP. It carries out the reaction dTDP + ATP = dTTP + ADP. In terms of biological role, broad-specificity mitochondrial nucleoside phosphate kinase involved in cellular nucleotide homeostasis by catalyzing nucleoside-phosphate interconversions. Similar to other adenylate kinases, preferentially catalyzes the phosphorylation of the nucleoside monophosphate AMP with ATP as phosphate donor to produce ADP. Phosphorylates only AMP when using GTP as phosphate donor. In vitro, can also catalyze the phosphorylation of CMP, dAMP and dCMP and use GTP as an alternate phosphate donor. Moreover, exhibits a diphosphate kinase activity, producing ATP, CTP, GTP, UTP, TTP, dATP, dCTP and dGTP from the corresponding diphosphate substrates with either ATP or GTP as phosphate donors. Plays a role in controlling cellular ATP levels by regulating phosphorylation and activation of the energy sensor protein kinase AMPK. Plays a protective role in the cellular response to oxidative stress. This Homo sapiens (Human) protein is Adenylate kinase 4, mitochondrial.